The sequence spans 470 residues: ESX-4 secretion system ATPase EccB4 (470 aa).

The helical transmembrane segment at 44 to 64 (LALGCVLAIVAAMGCAFVALL) threads the bilayer.

Belongs to the EccB family. Part of the ESX-4 / type VII secretion system (T7SS), which is composed of cytosolic and membrane components.

The protein localises to the cell membrane. In terms of biological role, an ATPase. The protein is ESX-4 secretion system ATPase EccB4 (eccB4) of Mycobacterium tuberculosis (strain CDC 1551 / Oshkosh).